A 169-amino-acid polypeptide reads, in one-letter code: Peptide deformylase (169 aa).

Fe cation contacts are provided by cysteine 91 and histidine 133. Glutamate 134 is a catalytic residue. Histidine 137 contributes to the Fe cation binding site.

The protein belongs to the polypeptide deformylase family. Fe(2+) serves as cofactor.

The catalysed reaction is N-terminal N-formyl-L-methionyl-[peptide] + H2O = N-terminal L-methionyl-[peptide] + formate. Removes the formyl group from the N-terminal Met of newly synthesized proteins. Requires at least a dipeptide for an efficient rate of reaction. N-terminal L-methionine is a prerequisite for activity but the enzyme has broad specificity at other positions. The chain is Peptide deformylase from Salmonella arizonae (strain ATCC BAA-731 / CDC346-86 / RSK2980).